A 94-amino-acid chain; its full sequence is Cell division protein FtsB (94 aa).

The Cytoplasmic portion of the chain corresponds to M1 to W8. A helical membrane pass occupies residues L9–V26. Over G27–K94 the chain is Periplasmic. A coiled-coil region spans residues L31–H78.

This sequence belongs to the FtsB family. Part of a complex composed of FtsB, FtsL and FtsQ.

The protein resides in the cell inner membrane. Its function is as follows. Essential cell division protein. May link together the upstream cell division proteins, which are predominantly cytoplasmic, with the downstream cell division proteins, which are predominantly periplasmic. The protein is Cell division protein FtsB of Pseudomonas aeruginosa (strain ATCC 15692 / DSM 22644 / CIP 104116 / JCM 14847 / LMG 12228 / 1C / PRS 101 / PAO1).